Reading from the N-terminus, the 425-residue chain is AFP homolog 2 (425 aa).

2 disordered regions span residues 1 to 207 (MDDD…SGTE) and 288 to 327 (PFAGRVPSNSATAKGEGKQPVAEEGSSEDASERPTGDNSN). Residues 7 to 17 (LELSLGLSCGG) form a necessary and sufficient for the interaction with TOPLESS region. The span at 20–34 (GKAKGNNNNNAGSSS) shows a compositional bias: low complexity. A compositionally biased stretch (basic and acidic residues) spans 37–54 (YRAEGGDRSAKVIDDFKN). Residues 66–81 (PSSGSQRSDSGQQPPQ) show a composition bias toward low complexity. Over residues 124 to 140 (NDDKKKEKDSSHVDMHE) the composition is skewed to basic and acidic residues. Composition is skewed to polar residues over residues 146 to 158 (SHVSTATDEGSTA), 185 to 197 (TDTNIVDNLTGQR), and 288 to 299 (PFAGRVPSNSAT). Positions 322 to 425 (TGDNSNLNTA…MGMTAASAHT (104 aa)) are necessary and sufficient for the interaction with the JAZ proteins.

This sequence belongs to the Ninja family. Component of a complex at least composed of TOPLESS, TPR2, TPR3, TIFY4B/PPD2, MYC3/ATR2 and TIFY3B/JAZ12. Interacts (via C-terminus) with TIFY10A/JAZ1; TIFY10B/JAZ2; TIFY6B/JAZ3; TIFY6A/JAZ4; TIFY11A/JAZ5; TIFY11B/JAZ6; TIFY7/JAZ9; TIFY9/JAZ10; TIFY3A/JAZ11; TIFY3B/JAZ12; TIFY4A/PPD1; TIFY4B/PPD2 and TIFY8 (via TIFY domain). Interacts with TOPLESS. Interacts with PAT1H1.

Its subcellular location is the nucleus. In terms of biological role, acts as a transcriptional repressor. Negative regulator of jasmonate responses. Connects the JAZ proteins and the non-JAZ protein TIFY8 with the TOPLESS corepressors. The protein is AFP homolog 2 of Arabidopsis thaliana (Mouse-ear cress).